The sequence spans 709 residues: Phosphoprotein (709 aa).

The segment at 1–35 (MDKLELVNDGLNIIDFIQKNQKEIQKTYGRSSIQQ) is N0 binding. Positions 53–92 (SGESEQVEGGMSKDDGDVERRNLEDLSSTSPTDGTIGKRV) are disordered. Residues 63–76 (MSKDDGDVERRNLE) are compositionally biased toward basic and acidic residues. The tract at residues 110–140 (VVTDVVYHDHGGECTGYGFTSSPERGWSDYT) is interaction with host STAT1. Residue Ser257 is modified to Phosphoserine; by host. A disordered region spans residues 265–324 (ISPEDEEPSSVGGKPNESIGRTIEGQSIRDNLQAKDNKSTDVPGAGPKDSAVKEEPPQKR). Position 350 is a phosphoserine; by host (Ser350). A disordered region spans residues 384–473 (VQTADRQRPG…VNPVDDNDSL (90 aa)). 2 stretches are compositionally biased toward polar residues: residues 416-426 (GTENVPGSKSG) and 444-456 (NAEN…STAV). Residues 475–580 (DKYIMPSDDF…LVSMMIMIPG (106 aa)) are multimerization.

As to quaternary structure, homotetramer. Interacts (via multimerization domain) with polymerase L; this interaction forms the polymerase L-P complex. Interacts (via N-terminus) with N0 (via Ncore); this interaction allows P to chaperon N0 to avoid N polymerization before encapsidation. Interacts (via C-terminus) with N-RNA template (via C-terminus); this interaction positions the polymerase on the template for both transcription and replication. Interacts with host STAT1.

It localises to the virion. Its subcellular location is the host cytoplasm. Essential cofactor of the RNA polymerase L that plays a central role in the transcription and replication by forming the polymerase complex with RNA polymerase L and recruiting L to the genomic N-RNA template for RNA synthesis. Also plays a central role in the encapsidation of nascent RNA chains by forming the encapsidation complex with the nucleocapsid protein N (N-P complex). Acts as a chaperone for newly synthesized free N protein, so-called N0, allowing encapsidation of nascent RNA chains during replication. The nucleoprotein protein N prevents excessive phosphorylation of P, which leads to down-regulation of viral transcription/ replication. Participates, together with N, in the formation of viral factories (viroplasms), which are large inclusions in the host cytoplasm where replication takes place. This Nipah virus protein is Phosphoprotein (P/V/C).